Consider the following 240-residue polypeptide: Methylthioribulose-1-phosphate dehydratase (240 aa).

Cys103 lines the substrate pocket. Residues His121 and His123 each coordinate Zn(2+). The active-site Proton donor/acceptor is Glu144. Zn(2+) is bound at residue His200.

It belongs to the aldolase class II family. MtnB subfamily. Requires Zn(2+) as cofactor.

The protein resides in the cytoplasm. It catalyses the reaction 5-(methylsulfanyl)-D-ribulose 1-phosphate = 5-methylsulfanyl-2,3-dioxopentyl phosphate + H2O. It participates in amino-acid biosynthesis; L-methionine biosynthesis via salvage pathway; L-methionine from S-methyl-5-thio-alpha-D-ribose 1-phosphate: step 2/6. Functionally, catalyzes the dehydration of methylthioribulose-1-phosphate (MTRu-1-P) into 2,3-diketo-5-methylthiopentyl-1-phosphate (DK-MTP-1-P). The sequence is that of Methylthioribulose-1-phosphate dehydratase from Komagataella phaffii (strain GS115 / ATCC 20864) (Yeast).